Reading from the N-terminus, the 356-residue chain is Aromatic dipeptide epimerase (356 aa).

Substrate-binding positions include Thr-136 and 161–163; that span reads KVK. The Mg(2+) site is built by Asp-191, Glu-219, and Asp-244. Residues Lys-268 and 320–322 each bind substrate; that span reads DLD.

Belongs to the mandelate racemase/muconate lactonizing enzyme family. The cofactor is Mg(2+).

Functionally, has epimerase activity with a variety of hydrophobic dipeptides (in vitro). Enzyme activity is highest with L-Phe-L-Tyr, but is still relatively low, suggesting that L-Phe-L-Tyr is not the physiological substrate. In Herpetosiphon aurantiacus (strain ATCC 23779 / DSM 785 / 114-95), this protein is Aromatic dipeptide epimerase.